The chain runs to 323 residues: uncharacterized protein (323 aa).

A helical membrane pass occupies residues 4–24; it reads IIFAFIILFVFLLPMIIFYQP.

It is found in the membrane. This is an uncharacterized protein from Escherichia coli (strain K12).